Reading from the N-terminus, the 399-residue chain is MSDILRELLCVSEKAANIARACRQQEALFQLLIEEKKEGEKNKKFAVDFKTLADVLVQEVIKQNMENKFPGLEKNIFGEESNEFTNDWGEKITLRLCSTEEETAELLSKVLNGNKVASEALARVVHQDVAFTDPTLDSTEINVPQDILGIWVDPIDSTYQYIKGSADIKSNQGIFPCGLQCVTILIGVYDIQTGVPLMGVINQPFVSRDPNTLRWKGQCYWGLSYMGTNMHSLQLTISRRNGSETHTGNTGSEAAFSPSFSAVISTSEKETIKAALSRVCGDRIFGAAGAGYKSLCVVQGLVDIYIFSEDTTFKWDSCAAHAILRAMGGGIVDLKECLERNPETGLDLPQLVYHVENEGAAGVDRWANKGGLIAYRSRKRLETFLSLLVQNLAPAETHT.

Asp54 contacts Li(+). Position 79 (Glu79) interacts with Mg(2+). Position 80 (Glu80) interacts with Li(+). Positions 153 and 155 each coordinate Mg(2+). 1D-myo-inositol 1,4-bisphosphate is bound by residues Asp156, Ser157, Thr158, Ser267, Lys269, Gly289, Ala290, Lys293, and Thr311. Residue Asp316 participates in Mg(2+) binding. The residue at position 317 (Ser317) is a Phosphoserine.

This sequence belongs to the inositol monophosphatase superfamily. Monomer. Requires Mg(2+) as cofactor. In terms of tissue distribution, ubiquitously expressed, with highest levels in pancreas and kidney.

The catalysed reaction is 1D-myo-inositol 1,4-bisphosphate + H2O = 1D-myo-inositol 4-phosphate + phosphate. It carries out the reaction 1D-myo-inositol 1,3,4-trisphosphate + H2O = 1D-myo-inositol 3,4-bisphosphate + phosphate. The protein operates within signal transduction; phosphatidylinositol signaling pathway. Its activity is regulated as follows. Inhibited by Li(+). Its function is as follows. Mg(2+)-dependent phosphatase that catalyzes the hydrolysis of the 1-position phosphate from inositol 1,4-bisphosphate and inositol 1,3,4-trisphosphate and participates in inositol phosphate metabolism. The chain is Inositol polyphosphate 1-phosphatase from Homo sapiens (Human).